The sequence spans 32 residues: Protamine-2 (32 aa).

Positions 1–32 are disordered; sequence PRRRRSSSRPVRRRRARRVSRRRRRRGGRRRR.

Testis.

It localises to the nucleus. Its subcellular location is the chromosome. Protamines substitute for histones in the chromatin of sperm during the haploid phase of spermatogenesis. They compact sperm DNA into a highly condensed, stable and inactive complex. The chain is Protamine-2 from Oncorhynchus mykiss (Rainbow trout).